A 411-amino-acid polypeptide reads, in one-letter code: Probable tRNA pseudouridine synthase D (411 aa).

Aspartate 81 serves as the catalytic Nucleophile. A TRUD domain is found at 154-375 (GTPNFFGLQR…SGSYRPADTL (222 aa)).

Belongs to the pseudouridine synthase TruD family.

It catalyses the reaction uridine(13) in tRNA = pseudouridine(13) in tRNA. Functionally, could be responsible for synthesis of pseudouridine from uracil-13 in transfer RNAs. This Archaeoglobus fulgidus (strain ATCC 49558 / DSM 4304 / JCM 9628 / NBRC 100126 / VC-16) protein is Probable tRNA pseudouridine synthase D.